Consider the following 468-residue polypeptide: 3-isopropylmalate dehydratase large subunit (468 aa).

Residues cysteine 349, cysteine 409, and cysteine 412 each contribute to the [4Fe-4S] cluster site.

This sequence belongs to the aconitase/IPM isomerase family. LeuC type 1 subfamily. As to quaternary structure, heterodimer of LeuC and LeuD. Requires [4Fe-4S] cluster as cofactor.

It catalyses the reaction (2R,3S)-3-isopropylmalate = (2S)-2-isopropylmalate. It participates in amino-acid biosynthesis; L-leucine biosynthesis; L-leucine from 3-methyl-2-oxobutanoate: step 2/4. Its function is as follows. Catalyzes the isomerization between 2-isopropylmalate and 3-isopropylmalate, via the formation of 2-isopropylmaleate. The protein is 3-isopropylmalate dehydratase large subunit of Ruegeria pomeroyi (strain ATCC 700808 / DSM 15171 / DSS-3) (Silicibacter pomeroyi).